A 37-amino-acid polypeptide reads, in one-letter code: MKVSASVKKICRNCKIIRRKGVVRVICTDPRHKQRQG.

The protein belongs to the bacterial ribosomal protein bL36 family.

The sequence is that of Large ribosomal subunit protein bL36 from Leptothrix cholodnii (strain ATCC 51168 / LMG 8142 / SP-6) (Leptothrix discophora (strain SP-6)).